The chain runs to 77 residues: Acyl carrier protein (77 aa).

The 76-residue stretch at serine 2–glutamine 77 folds into the Carrier domain. Residue serine 37 is modified to O-(pantetheine 4'-phosphoryl)serine.

This sequence belongs to the acyl carrier protein (ACP) family. Post-translationally, 4'-phosphopantetheine is transferred from CoA to a specific serine of apo-ACP by AcpS. This modification is essential for activity because fatty acids are bound in thioester linkage to the sulfhydryl of the prosthetic group.

Its subcellular location is the cytoplasm. It participates in lipid metabolism; fatty acid biosynthesis. Carrier of the growing fatty acid chain in fatty acid biosynthesis. In Vibrio campbellii (strain ATCC BAA-1116), this protein is Acyl carrier protein.